The sequence spans 175 residues: Co-chaperone protein HscB homolog (175 aa).

Positions 7–79 (SHFALFNLPE…LKRARYLLSL (73 aa)) constitute a J domain.

It belongs to the HscB family. In terms of assembly, interacts with HscA and stimulates its ATPase activity.

Functionally, co-chaperone involved in the maturation of iron-sulfur cluster-containing proteins. Seems to help targeting proteins to be folded toward HscA. The chain is Co-chaperone protein HscB homolog from Paraburkholderia phymatum (strain DSM 17167 / CIP 108236 / LMG 21445 / STM815) (Burkholderia phymatum).